The primary structure comprises 228 residues: uncharacterized protein (228 aa).

The signal sequence occupies residues 1 to 15 (MKQKYLFIASMALAG). A lipid anchor (N-palmitoyl cysteine) is attached at C16. C16 is lipidated: S-diacylglycerol cysteine.

The protein to P.multocida PM0015.

Its subcellular location is the cell membrane. This is an uncharacterized protein from Pasteurella multocida (strain Pm70).